Here is a 252-residue protein sequence, read N- to C-terminus: Imidazole glycerol phosphate synthase subunit HisF (252 aa).

Active-site residues include Asp11 and Asp130.

This sequence belongs to the HisA/HisF family. As to quaternary structure, heterodimer of HisH and HisF.

It is found in the cytoplasm. The catalysed reaction is 5-[(5-phospho-1-deoxy-D-ribulos-1-ylimino)methylamino]-1-(5-phospho-beta-D-ribosyl)imidazole-4-carboxamide + L-glutamine = D-erythro-1-(imidazol-4-yl)glycerol 3-phosphate + 5-amino-1-(5-phospho-beta-D-ribosyl)imidazole-4-carboxamide + L-glutamate + H(+). Its pathway is amino-acid biosynthesis; L-histidine biosynthesis; L-histidine from 5-phospho-alpha-D-ribose 1-diphosphate: step 5/9. Functionally, IGPS catalyzes the conversion of PRFAR and glutamine to IGP, AICAR and glutamate. The HisF subunit catalyzes the cyclization activity that produces IGP and AICAR from PRFAR using the ammonia provided by the HisH subunit. This Persephonella marina (strain DSM 14350 / EX-H1) protein is Imidazole glycerol phosphate synthase subunit HisF.